Reading from the N-terminus, the 105-residue chain is Host transcription reprogramming factor 7 (105 aa).

Residues 1–19 form the signal peptide; that stretch reads MKTKTIFQLVALFAIGATA. The segment at 69–95 adopts a C2H2-type zinc-finger fold; that stretch reads YWCRIGNCNAAFKSLAARCRHEKTAVH.

The protein localises to the secreted. The protein resides in the host nucleus. Functionally, probable secreted effector that translocates into the nuclei of host cells to reprogram the expression of targeted genes by binding on effector binding elements in rice. The protein is Host transcription reprogramming factor 7 of Pyricularia oryzae (strain 70-15 / ATCC MYA-4617 / FGSC 8958) (Rice blast fungus).